The following is a 297-amino-acid chain: Carboxysome assembly protein CcmO (297 aa).

Residues 1–29 (MPTSPTMTSVPIARSPRPSYQQINQHQPS) are disordered. Over residues 18–29 (PSYQQINQHQPS) the composition is skewed to polar residues. BMC domains follow at residues 32 to 116 (ALGL…AVFP) and 138 to 222 (SIGL…HTLP).

The protein belongs to the bacterial microcompartments protein family. As to quaternary structure, homooligomerizes, possibly as a trimer, interacts with CcmK in the carboxysome.

The protein localises to the carboxysome. Required for formation of the carboxysome, a polyhedral inclusion where RuBisCO (ribulose bisphosphate carboxylase, rbcL-rbcS) is sequestered. Required for recruitment of major shell protein CcmK2 to the pre-carboxysome. Suggested to be a carboxysome shell protein. The chain is Carboxysome assembly protein CcmO from Synechocystis sp. (strain ATCC 27184 / PCC 6803 / Kazusa).